Reading from the N-terminus, the 141-residue chain is HTH-type transcriptional repressor NsrR (141 aa).

Positions 2 to 129 (QLTNFTDFGL…DKHTIQDMLT (128 aa)) constitute an HTH rrf2-type domain. The H-T-H motif DNA-binding region spans 28-51 (ITVVTETFDVSRNHMVKIINKLGQ). C91, C96, and C102 together coordinate [2Fe-2S] cluster.

Requires [2Fe-2S] cluster as cofactor.

Nitric oxide-sensitive repressor of genes involved in protecting the cell against nitrosative stress. May require iron for activity. The protein is HTH-type transcriptional repressor NsrR of Aliivibrio fischeri (strain ATCC 700601 / ES114) (Vibrio fischeri).